The following is a 353-amino-acid chain: Protein RecA (353 aa).

65–72 (GPESSGKT) is an ATP binding site. Residues 334–345 (DAERAGAEREDN) show a composition bias toward basic and acidic residues. Residues 334-353 (DAERAGAEREDNAAADDENF) are disordered.

Belongs to the RecA family.

The protein localises to the cytoplasm. Can catalyze the hydrolysis of ATP in the presence of single-stranded DNA, the ATP-dependent uptake of single-stranded DNA by duplex DNA, and the ATP-dependent hybridization of homologous single-stranded DNAs. It interacts with LexA causing its activation and leading to its autocatalytic cleavage. The sequence is that of Protein RecA from Edwardsiella ictaluri (strain 93-146).